Here is a 778-residue protein sequence, read N- to C-terminus: Dapper homolog 1 (778 aa).

2 stretches are compositionally biased toward basic and acidic residues: residues 1–10 (MKPDAAREPE) and 18–40 (AEAE…TRER). Residues 1 to 40 (MKPDAAREPEPLSPGRGAEAEGRWRERGEADTERQRTRER) form a disordered region. A required for self-association region spans residues 85-149 (DAAQRSRLEE…SEEHLETDSR (65 aa)). A coiled-coil region spans residues 85–149 (DAAQRSRLEE…SEEHLETDSR (65 aa)). The Nuclear export signal motif lies at 125–134 (LDKQISDLRL). Disordered stretches follow at residues 305–324 (KTHP…DPTK), 359–386 (GGIT…QLES), 397–416 (AGAA…KAAS), 428–468 (ESMK…SQKN), 544–616 (EKPR…HKRT), and 694–721 (NCFG…SEES). Over residues 375 to 386 (RSKDSKTDQLES) the composition is skewed to basic and acidic residues. Residues 432 to 443 (ESNQASAVSPKT) are compositionally biased toward polar residues. The Bipartite nuclear localization signal motif lies at 551–564 (KKCRFPDDSDTNKK). Residues 554–563 (RFPDDSDTNK) are compositionally biased toward basic and acidic residues. The segment covering 564-574 (KFRKTSAKGRR) has biased composition (basic residues). Positions 694 to 704 (NCFGDSESSVS) are enriched in polar residues. The PDZ-binding signature appears at 768 to 778 (RSGSLKLMTTV). At Ser769 the chain carries Phosphoserine; by PKA.

The protein belongs to the dapper family. In terms of assembly, can form homodimers and heterodimers with DACT2 or DACT3. Interacts with CSNK1D, PKA catalytic subunit, PKC-type kinase, CSNK2A1, CSNK2B, DVL1, DLV2, DVAL3, VANGL1, VANGL2, CTNND1 and HDAC1. Interacts with GSK3B; the interaction is indicative for an association of DACT1 with the beta-catenin destruction complex. Interacts with GSK3A. Interacts with YWHAB; the interaction is enhanced by PKA phosphorylating DACT1 at Ser-769. Interacts with CTNNB1. In terms of tissue distribution, expressed in multiple tissues including brain, heart, kidney, liver and testis.

The protein localises to the cytoplasm. Its subcellular location is the nucleus. It is found in the synapse. In terms of biological role, involved in regulation of intracellular signaling pathways during development. Specifically thought to play a role in canonical and/or non-canonical Wnt signaling pathways through interaction with DSH (Dishevelled) family proteins. The activation/inhibition of Wnt signaling may depend on the phosphorylation status. Proposed to regulate the degradation of CTNNB1/beta-catenin, thereby modulating the transcriptional activation of target genes of the Wnt signaling pathway. Its function in stabilizing CTNNB1 may involve inhibition of GSK3B activity. Promotes the membrane localization of CTNNB1. The cytoplasmic form can induce DVL2 degradation via a lysosome-dependent mechanism; the function is inhibited by PKA-induced binding to 14-3-3 proteins, such as YWHAB. Seems to be involved in morphogenesis at the primitive streak by regulating VANGL2 and DVL2; the function seems to be independent of canonical Wnt signaling and rather involves the non-canonical Wnt/planar cell polarity (PCP) pathway. The nuclear form may prevent the formation of LEF1:CTNNB1 complex and recruit HDAC1 to LEF1 at target gene promoters to repress transcription thus antagonizing Wnt signaling. May be involved in positive regulation of fat cell differentiation. During neuronal differentiation may be involved in excitatory synapse organization, and dendrite formation and establishment of spines. This chain is Dapper homolog 1 (Dact1), found in Mus musculus (Mouse).